We begin with the raw amino-acid sequence, 244 residues long: Putative ribosomal recycling factor, mitochondrial (244 aa).

It belongs to the RRF family.

Its subcellular location is the mitochondrion. In terms of biological role, necessary for protein synthesis in mitochondria. Functions as a ribosome recycling factor in mitochondria. This chain is Putative ribosomal recycling factor, mitochondrial (rrf1), found in Schizosaccharomyces pombe (strain 972 / ATCC 24843) (Fission yeast).